Reading from the N-terminus, the 331-residue chain is Polyprenyl transferase mpaA' (331 aa).

The next 8 helical transmembrane spans lie at 27-47, 56-76, 127-147, 159-179, 190-210, 240-260, 264-284, and 295-315; these read MPYY…ALKL, IEFI…LCGA, LILD…SIML, VFVY…ITGW, GDII…CVYF, LFLA…ISTI, WLWV…IAQF, and IHWD…VEVG.

It belongs to the UbiA prenyltransferase family. Mg(2+) serves as cofactor.

The protein resides in the golgi apparatus membrane. The enzyme catalyses 5,7-dihydroxy-4-methylphthalide + (2E,6E)-farnesyl diphosphate = 4-farnesyl-3,5-dihydroxy-6-methylphthalide + diphosphate. The protein operates within secondary metabolite biosynthesis; terpenoid biosynthesis. Polyprenyl transferase; part of the gene cluster that mediates the biosynthesis of mycophenolic acid (MPA), the first isolated antibiotic natural product in the world obtained from a culture of Penicillium brevicompactum in 1893. MpaA' is a Golgi apparatus-associated enzyme that catalyzes the prenylation of 5,7-dihydroxy-4,6-dimethylphthalide (DHMP) to yield farnesyl-DHMP (FDHMP). The first step of the pathway is the synthesis of 5-methylorsellinic acid (5MOA) by the cytosolic polyketide synthase mpaC. 5MOA is then converted to the phthalide compound 5,7-dihydroxy-4,6-dimethylphthalide (DHMP) by the endoplasmic reticulum-bound cytochrome P450 monooxygenase mpaDE. MpaDE first catalyzes hydroxylation of 5-MOA to 4,6-dihydroxy-2-(hydroxymethyl)-3-methylbenzoic acid (DHMB). MpaDE then acts as a lactone synthase that catalyzes the ring closure to convert DHMB into DHMP. The next step is the prenylation of DHMP by the Golgi apparatus-associated prenyltransferase mpaA to yield farnesyl-DHMP (FDHMP). The ER-bound oxygenase mpaB then mediates the oxidative cleavage the C19-C20 double bond in FDHMP to yield FDHMP-3C via a mycophenolic aldehyde intermediate. The O-methyltransferase mpaG catalyzes the methylation of FDHMP-3C to yield MFDHMP-3C. After the cytosolic methylation of FDHMP-3C, MFDHMP-3C enters into peroxisomes probably via free diffusion due to its low molecular weight. Upon a peroxisomal CoA ligation reaction, catalyzed by a beta-oxidation component enzyme acyl-CoA ligase ACL891, MFDHMP-3C-CoA would then be restricted to peroxisomes for the following beta-oxidation pathway steps. The peroxisomal beta-oxidation machinery than converts MFDHMP-3C-CoA into MPA_CoA, via a beta-oxidation chain-shortening process. Finally mpaH acts as a peroxisomal acyl-CoA hydrolase with high substrate specificity toward MPA-CoA to release the final product MPA. The protein is Polyprenyl transferase mpaA' of Penicillium brevicompactum.